A 494-amino-acid chain; its full sequence is Lipopolysaccharide core galacturonosyltransferase RgtB (494 aa).

The next 10 membrane-spanning stretches (helical) occupy residues 9–29, 74–94, 104–124, 127–147, 156–176, 197–217, 251–271, 291–311, 316–336, and 345–365; these read ISWIFALLAAYFVLQVGVRLA, LTALSIVKNLLLFISYLLYGL, ALVAIATLGLLTIPQMAFEMQ, LTHTVAVFFSASIFFYGFIRS, YLIAGIGIGFGLLAKYNFAIL, WRLGLTAAVALVITLPHLFWL, LALAIISFAALTVAVFAIVFG, MMLVFLAGILLLIVFGGAAGI, LVPMLFILPLYFCLKIEAAGV, and FIPVVAVIMIGVPAALYGSVA.

This sequence belongs to the glycosyltransferase 83 family.

Its subcellular location is the cell inner membrane. It functions in the pathway bacterial outer membrane biogenesis; LPS core biosynthesis. Its function is as follows. Involved in the modification of the lipopolysaccharide (LPS) inner core. Catalyzes the transfer of a galacturonic acid (GalA) residue to the 5-position of the outer Kdo (3-deoxy-D-manno-octulosonic acid) residue of the LPS inner core, using dodecaprenyl phosphate-GalA as the donor substrate. Acts after the other GalA transferase RgtA. The protein is Lipopolysaccharide core galacturonosyltransferase RgtB of Rhizobium johnstonii (strain DSM 114642 / LMG 32736 / 3841) (Rhizobium leguminosarum bv. viciae).